A 150-amino-acid chain; its full sequence is Large ribosomal subunit protein uL15 (150 aa).

The segment covering Met-1–Asn-15 has biased composition (polar residues). The disordered stretch occupies residues Met-1–Glu-52. A compositionally biased stretch (gly residues) spans Gly-23–Ser-32.

This sequence belongs to the universal ribosomal protein uL15 family. In terms of assembly, part of the 50S ribosomal subunit.

In terms of biological role, binds to the 23S rRNA. This is Large ribosomal subunit protein uL15 from Flavobacterium psychrophilum (strain ATCC 49511 / DSM 21280 / CIP 103535 / JIP02/86).